The following is a 457-amino-acid chain: Embryogenesis-associated protein EMB8 (457 aa).

The disordered stretch occupies residues 39–59 (KKPAAGACEEQDELTSGSAAR). The 241-residue stretch at 151-391 (PVLILLPGLT…LVVTPNGGHL (241 aa)) folds into the AB hydrolase-1 domain. Catalysis depends on charge relay system residues Ser-231, Asp-361, and His-390. Over residues 438-447 (VDSVHTRETN) the composition is skewed to basic and acidic residues. The disordered stretch occupies residues 438 to 457 (VDSVHTRETNNYKSPIENVN). Positions 448 to 457 (NYKSPIENVN) are enriched in polar residues.

It belongs to the AB hydrolase superfamily. AB hydrolase 4 family.

This chain is Embryogenesis-associated protein EMB8 (EMB8), found in Picea glauca (White spruce).